A 373-amino-acid chain; its full sequence is tRNA 2-selenouridine synthase (373 aa).

One can recognise a Rhodanese domain in the interval 12-136 (FINDRPMMDA…MRGFLLETTE (125 aa)). Cys95 functions as the S-selanylcysteine intermediate in the catalytic mechanism.

Belongs to the SelU family. In terms of assembly, monomer.

It carries out the reaction 5-methylaminomethyl-2-thiouridine(34) in tRNA + selenophosphate + (2E)-geranyl diphosphate + H2O + H(+) = 5-methylaminomethyl-2-selenouridine(34) in tRNA + (2E)-thiogeraniol + phosphate + diphosphate. The catalysed reaction is 5-methylaminomethyl-2-thiouridine(34) in tRNA + (2E)-geranyl diphosphate = 5-methylaminomethyl-S-(2E)-geranyl-thiouridine(34) in tRNA + diphosphate. The enzyme catalyses 5-methylaminomethyl-S-(2E)-geranyl-thiouridine(34) in tRNA + selenophosphate + H(+) = 5-methylaminomethyl-2-(Se-phospho)selenouridine(34) in tRNA + (2E)-thiogeraniol. It catalyses the reaction 5-methylaminomethyl-2-(Se-phospho)selenouridine(34) in tRNA + H2O = 5-methylaminomethyl-2-selenouridine(34) in tRNA + phosphate. Functionally, involved in the post-transcriptional modification of the uridine at the wobble position (U34) of tRNA(Lys), tRNA(Glu) and tRNA(Gln). Catalyzes the conversion of 2-thiouridine (S2U-RNA) to 2-selenouridine (Se2U-RNA). Acts in a two-step process involving geranylation of 2-thiouridine (S2U) to S-geranyl-2-thiouridine (geS2U) and subsequent selenation of the latter derivative to 2-selenouridine (Se2U) in the tRNA chain. In Ectopseudomonas mendocina (strain ymp) (Pseudomonas mendocina), this protein is tRNA 2-selenouridine synthase.